Here is a 481-residue protein sequence, read N- to C-terminus: G-protein coupled receptor 37-like 1 (481 aa).

A signal peptide spans 1 to 25; it reads MRWLWPLAVSLAVILAVGLSRVSGG. Disordered regions lie at residues 26–58 and 70–108; these read APLH…GVQQ and PIHP…NLTG. The Extracellular portion of the chain corresponds to 26–134; it reads APLHLGRHRA…ESSYSAYAIM (109 aa). T79 and T85 each carry an O-linked (GalNAc...) threonine glycan. O-linked (GalNAc...) serine glycosylation occurs at S86. A glycan (O-linked (GalNAc...) threonine) is linked at T95. N-linked (GlcNAc...) asparagine glycosylation occurs at N105. A glycan (O-linked (GalNAc...) threonine) is linked at T107. Residues 135–155 traverse the membrane as a helical segment; that stretch reads LLALVVFAVGIVGNLSVMCIV. Over 156–167 the chain is Cytoplasmic; sequence WHSYYLKSAWNS. The helical transmembrane segment at 168–188 threads the bilayer; it reads ILASLALWDFLVLFFCLPIVI. Over 189 to 205 the chain is Extracellular; that stretch reads FNEITKQRLLGDVSCRA. The cysteines at positions 203 and 286 are disulfide-linked. Residues 206-226 form a helical membrane-spanning segment; it reads VPFMEVSSLGVTTFSLCALGI. Residues 227-251 lie on the Cytoplasmic side of the membrane; that stretch reads DRFHVATSTLPKVRPIERCQSILAK. A helical transmembrane segment spans residues 252–272; it reads LAVIWVGSMTLAVPELLLWQL. Over 273–310 the chain is Extracellular; it reads AQEPAPTMGTLDSCIMKPSASLPESLYSLVMTYQNARM. The helical transmembrane segment at 311-331 threads the bilayer; sequence WWYFGCYFCLPILFTVTCQLV. At 332-361 the chain is on the cytoplasmic side; the sequence is TWRVRGPPGRKSECRASKHEQCESQLNSTV. The helical transmembrane segment at 362–382 threads the bilayer; the sequence is VGLTVVYAFCTLPENVCNIVV. The Extracellular portion of the chain corresponds to 383–398; that stretch reads AYLSTELTRQTLDLLG. Residues 399–419 form a helical membrane-spanning segment; sequence LINQFSTFFKGAITPVLLLCI. Topologically, residues 420–481 are cytoplasmic; sequence CRPLGQAFLD…PPLLPLGTPC (62 aa). Position 471 is a phosphoserine (S471). Position 479 is a phosphothreonine (T479).

The protein belongs to the G-protein coupled receptor 1 family. Interacts with the PTCH1 receptor. In terms of processing, O-glycosylated. Undergoes metalloprotease-mediated cleavage which reduces its constitutive activity. Post-translationally, ubiquitinated. As to expression, expressed in primary cortical astrocytes (at protein level). Expressed in the central nervous system.

The protein resides in the cell membrane. The protein localises to the cell projection. Its subcellular location is the cilium membrane. G-protein coupled receptor. Has been shown to bind the neuroprotective and glioprotective factor prosaposin (PSAP), leading to endocytosis followed by an ERK phosphorylation cascade. However, other studies have shown that prosaposin does not increase activity. It has been suggested that GPR37L1 is a constitutively active receptor which signals through the guanine nucleotide-binding protein G(s) subunit alpha. Participates in the regulation of postnatal cerebellar development by modulating the Shh pathway. Regulates baseline blood pressure in females and protects against cardiovascular stress in males. Mediates inhibition of astrocyte glutamate transporters and reduction in neuronal N-methyl-D-aspartate receptor activity. The protein is G-protein coupled receptor 37-like 1 (GPR37L1) of Homo sapiens (Human).